A 506-amino-acid polypeptide reads, in one-letter code: Histidine ammonia-lyase (506 aa).

Residues 143–145 (ASG) constitute a cross-link (5-imidazolinone (Ala-Gly)). Residue serine 144 is modified to 2,3-didehydroalanine (Ser).

It belongs to the PAL/histidase family. Post-translationally, contains an active site 4-methylidene-imidazol-5-one (MIO), which is formed autocatalytically by cyclization and dehydration of residues Ala-Ser-Gly.

It is found in the cytoplasm. The catalysed reaction is L-histidine = trans-urocanate + NH4(+). The protein operates within amino-acid degradation; L-histidine degradation into L-glutamate; N-formimidoyl-L-glutamate from L-histidine: step 1/3. This Salmonella choleraesuis (strain SC-B67) protein is Histidine ammonia-lyase.